Reading from the N-terminus, the 306-residue chain is Recombination-associated protein RdgC (306 aa).

Belongs to the RdgC family.

The protein localises to the cytoplasm. It localises to the nucleoid. Its function is as follows. May be involved in recombination. This is Recombination-associated protein RdgC from Pseudomonas paraeruginosa (strain DSM 24068 / PA7) (Pseudomonas aeruginosa (strain PA7)).